The following is a 439-amino-acid chain: Glucose-1-phosphate adenylyltransferase (439 aa).

Residues Y116, G182, 197–198 (EK), and S215 each bind alpha-D-glucose 1-phosphate.

It belongs to the bacterial/plant glucose-1-phosphate adenylyltransferase family. Homotetramer.

The catalysed reaction is alpha-D-glucose 1-phosphate + ATP + H(+) = ADP-alpha-D-glucose + diphosphate. It functions in the pathway glycan biosynthesis; glycogen biosynthesis. In terms of biological role, involved in the biosynthesis of ADP-glucose, a building block required for the elongation reactions to produce glycogen. Catalyzes the reaction between ATP and alpha-D-glucose 1-phosphate (G1P) to produce pyrophosphate and ADP-Glc. The protein is Glucose-1-phosphate adenylyltransferase of Pasteurella multocida (strain Pm70).